The following is a 292-amino-acid chain: Acetylglutamate kinase (292 aa).

Substrate contacts are provided by residues 64-65 (GG), R86, and N190.

The protein belongs to the acetylglutamate kinase family. ArgB subfamily.

The protein localises to the cytoplasm. The enzyme catalyses N-acetyl-L-glutamate + ATP = N-acetyl-L-glutamyl 5-phosphate + ADP. Its pathway is amino-acid biosynthesis; L-arginine biosynthesis; N(2)-acetyl-L-ornithine from L-glutamate: step 2/4. In terms of biological role, catalyzes the ATP-dependent phosphorylation of N-acetyl-L-glutamate. This Geotalea daltonii (strain DSM 22248 / JCM 15807 / FRC-32) (Geobacter daltonii) protein is Acetylglutamate kinase.